Consider the following 822-residue polypeptide: ATP-dependent zinc metalloprotease FTSH 8, mitochondrial (822 aa).

Over residues Met-1 to Phe-25 the composition is skewed to low complexity. Disordered regions lie at residues Met-1–Gly-50, Asn-103–Asp-131, and Ser-202–Asp-221. The N-terminal 93 residues, Met-1–Phe-93, are a transit peptide targeting the mitochondrion. Over residues Gly-108–Ser-127 the composition is skewed to basic and acidic residues. Position 375 to 382 (Gly-375 to Thr-382) interacts with ATP. Position 600 (His-600) interacts with Zn(2+). Residue Glu-601 is part of the active site. His-604 and Asp-676 together coordinate Zn(2+). The interval Pro-781 to Thr-822 is disordered.

This sequence in the N-terminal section; belongs to the AAA ATPase family. It in the C-terminal section; belongs to the peptidase M41 family. Requires Zn(2+) as cofactor.

It is found in the mitochondrion. In terms of biological role, probable ATP-dependent zinc metallopeptidase. This Oryza sativa subsp. japonica (Rice) protein is ATP-dependent zinc metalloprotease FTSH 8, mitochondrial (FTSH8).